The chain runs to 127 residues: Ribonuclease P protein component (127 aa).

This sequence belongs to the RnpA family. In terms of assembly, consists of a catalytic RNA component (M1 or rnpB) and a protein subunit.

The catalysed reaction is Endonucleolytic cleavage of RNA, removing 5'-extranucleotides from tRNA precursor.. Its function is as follows. RNaseP catalyzes the removal of the 5'-leader sequence from pre-tRNA to produce the mature 5'-terminus. It can also cleave other RNA substrates such as 4.5S RNA. The protein component plays an auxiliary but essential role in vivo by binding to the 5'-leader sequence and broadening the substrate specificity of the ribozyme. The chain is Ribonuclease P protein component from Corynebacterium urealyticum (strain ATCC 43042 / DSM 7109).